Consider the following 343-residue polypeptide: Ferredoxin--NADP reductase (343 aa).

Cysteine 18, aspartate 37, glutamine 45, tyrosine 50, valine 90, phenylalanine 125, aspartate 290, and threonine 331 together coordinate FAD.

The protein belongs to the ferredoxin--NADP reductase type 2 family. As to quaternary structure, homodimer. The cofactor is FAD.

It carries out the reaction 2 reduced [2Fe-2S]-[ferredoxin] + NADP(+) + H(+) = 2 oxidized [2Fe-2S]-[ferredoxin] + NADPH. This Parvibaculum lavamentivorans (strain DS-1 / DSM 13023 / NCIMB 13966) protein is Ferredoxin--NADP reductase.